The sequence spans 121 residues: Small ribosomal subunit protein uS13 (121 aa).

Residues 94–121 (SLPVRGQNTKNNSRTRKGPRRTVANKKK) are disordered. Positions 106–121 (SRTRKGPRRTVANKKK) are enriched in basic residues.

The protein belongs to the universal ribosomal protein uS13 family. As to quaternary structure, part of the 30S ribosomal subunit. Forms a loose heterodimer with protein S19. Forms two bridges to the 50S subunit in the 70S ribosome.

Functionally, located at the top of the head of the 30S subunit, it contacts several helices of the 16S rRNA. In the 70S ribosome it contacts the 23S rRNA (bridge B1a) and protein L5 of the 50S subunit (bridge B1b), connecting the 2 subunits; these bridges are implicated in subunit movement. Contacts the tRNAs in the A and P-sites. The polypeptide is Small ribosomal subunit protein uS13 (Exiguobacterium sp. (strain ATCC BAA-1283 / AT1b)).